A 151-amino-acid polypeptide reads, in one-letter code: Large ribosomal subunit protein uL15 (151 aa).

Residues 1–57 are disordered; that stretch reads MTLRLDSLKSNKGARRRKLRKGRGIAAGQGASCGFGMRGQKSRSGRPTRPGFEGGQM. Residues 12–23 show a composition bias toward basic residues; that stretch reads KGARRRKLRKGR. The segment covering 25–37 has biased composition (gly residues); it reads IAAGQGASCGFGM.

The protein belongs to the universal ribosomal protein uL15 family. Part of the 50S ribosomal subunit.

In terms of biological role, binds to the 23S rRNA. The polypeptide is Large ribosomal subunit protein uL15 (Synechococcus sp. (strain CC9605)).